Consider the following 229-residue polypeptide: Putative N-acetylmannosamine-6-phosphate 2-epimerase (229 aa).

It belongs to the NanE family.

It catalyses the reaction an N-acyl-D-glucosamine 6-phosphate = an N-acyl-D-mannosamine 6-phosphate. Its pathway is amino-sugar metabolism; N-acetylneuraminate degradation; D-fructose 6-phosphate from N-acetylneuraminate: step 3/5. Converts N-acetylmannosamine-6-phosphate (ManNAc-6-P) to N-acetylglucosamine-6-phosphate (GlcNAc-6-P). The chain is Putative N-acetylmannosamine-6-phosphate 2-epimerase from Shigella flexneri serotype 5b (strain 8401).